Here is a 196-residue protein sequence, read N- to C-terminus: GTP cyclohydrolase-2 (196 aa).

49–53 provides a ligand contact to GTP; that stretch reads RVHSE. Zn(2+) contacts are provided by C54, C65, and C67. Residues Q70, 92-94, and T114 each bind GTP; that span reads EGR. D126 (proton acceptor) is an active-site residue. R128 serves as the catalytic Nucleophile. Residues T149 and K154 each coordinate GTP.

It belongs to the GTP cyclohydrolase II family. As to quaternary structure, homodimer. Zn(2+) is required as a cofactor.

It carries out the reaction GTP + 4 H2O = 2,5-diamino-6-hydroxy-4-(5-phosphoribosylamino)-pyrimidine + formate + 2 phosphate + 3 H(+). Its pathway is cofactor biosynthesis; riboflavin biosynthesis; 5-amino-6-(D-ribitylamino)uracil from GTP: step 1/4. Catalyzes the conversion of GTP to 2,5-diamino-6-ribosylamino-4(3H)-pyrimidinone 5'-phosphate (DARP), formate and pyrophosphate. The chain is GTP cyclohydrolase-2 from Shigella dysenteriae serotype 1 (strain Sd197).